The sequence spans 136 residues: Small ribosomal subunit protein uS9 (136 aa).

The tract at residues 97–136 (SPDNRKPLKTEGHLSRDPRAKERRKYGLKKARKAPQFSKR) is disordered. The segment covering 98 to 116 (PDNRKPLKTEGHLSRDPRA) has biased composition (basic and acidic residues). A compositionally biased stretch (basic residues) spans 117-136 (KERRKYGLKKARKAPQFSKR).

This sequence belongs to the universal ribosomal protein uS9 family.

The protein is Small ribosomal subunit protein uS9 of Prochlorococcus marinus (strain AS9601).